The primary structure comprises 2281 residues: Retinal-specific phospholipid-transporting ATPase ABCA4 (2281 aa).

At Met-1 to Arg-24 the chain is on the cytoplasmic side. A helical membrane pass occupies residues Phe-25–Val-45. The Extracellular segment spans residues Asn-46–Ser-646. 2 disulfide bridges follow: Cys-54–Cys-81 and Cys-75–Cys-324. Asn-98 carries an N-linked (GlcNAc...) asparagine glycan. The Mg(2+) site is built by Ser-336 and Asn-338. Cys-370 and Cys-519 are joined by a disulfide. N-linked (Hex...) asparagine glycosylation is found at Asn-415 and Asn-504. The an N-all-trans-retinylidenephosphatidylethanolamine site is built by Arg-587 and Arg-653. Cystine bridges form between Cys-641/Cys-1488, Cys-1442/Cys-1453, and Cys-1486/Cys-1500. A helical membrane pass occupies residues Phe-647–Val-667. The Cytoplasmic portion of the chain corresponds to Ser-668–Thr-699. A helical membrane pass occupies residues Trp-700–Met-720. Over His-721–Pro-730 the chain is Extracellular. The chain crosses the membrane as a helical span at residues Phe-731 to Leu-751. Topologically, residues Ser-752–Ser-759 are cytoplasmic. Residues Leu-760–Phe-780 traverse the membrane as a helical segment. The Extracellular segment spans residues Ala-781–Ser-835. Residues Phe-836–Tyr-856 traverse the membrane as a helical segment. At Leu-857–Gln-1374 the chain is on the cytoplasmic side. Thr-901 carries the post-translational modification Phosphothreonine. An ABC transporter 1 domain is found at Val-929–Val-1160. Residues Phe-938, Gly-966, and Lys-969 each coordinate ATP. Residue Thr-970 participates in Mg(2+) binding. Residues Thr-971, Gln-1010, Lys-1054, Gly-1064, Gly-1065, and His-1118 each contribute to the ATP site. The residue at position 1185 (Ser-1185) is a Phosphoserine. The interval Glu-1295–Ser-1340 is disordered. The span at Ala-1310 to Ser-1319 shows a compositional bias: polar residues. At Thr-1313 the chain carries Phosphothreonine. A phosphoserine mark is found at Ser-1317 and Ser-1319. Residues Ile-1375–Phe-1395 traverse the membrane as a helical segment. Topologically, residues Gly-1396 to Val-1679 are extracellular. N-linked (Hex...) asparagine glycosylation is present at Asn-1455. Residue Asn-1527 is glycosylated (N-linked (Hex...) asparagine). Asn-1586 carries N-linked (GlcNAc...) asparagine glycosylation. The N-linked (Hex...) asparagine glycan is linked to Asn-1660. A helical membrane pass occupies residues Val-1680–Ile-1700. Topologically, residues Gln-1701–Asn-1725 are cytoplasmic. A helical transmembrane segment spans residues Phe-1726–Gly-1746. Residues Phe-1747–Asn-1757 lie on the Extracellular side of the membrane. A helical transmembrane segment spans residues Leu-1758 to Pro-1778. Over Ala-1779–Tyr-1790 the chain is Cytoplasmic. The helical transmembrane segment at Val-1791–Leu-1811 threads the bilayer. The Extracellular portion of the chain corresponds to Glu-1812–Lys-1829. Asn-1817 is a glycosylation site (N-linked (GlcNAc...) asparagine). Residues Leu-1830–Gln-1850 traverse the membrane as a helical segment. Over Ala-1851–Ala-1879 the chain is Cytoplasmic. A helical membrane pass occupies residues Met-1880–Phe-1900. At Ser-1901–Gly-2281 the chain is on the extracellular side. Asn-1931 carries N-linked (GlcNAc...) asparagine glycosylation. Residues Leu-1936 to Lys-2168 form the ABC transporter 2 domain. The ATP site is built by Asn-1972, Gly-1973, Lys-1976, Thr-1977, and Thr-1978. Mg(2+) is bound at residue Thr-1977. Asn-2004 and Asn-2050 each carry an N-linked (GlcNAc...) asparagine glycan. Gly-2071 is a binding site for ATP. An essential for ATP binding and ATPase activity region spans residues Val-2242 to Ala-2247. An N-linked (GlcNAc...) asparagine glycan is attached at Asn-2251. Residues Ala-2262–Gly-2281 form a disordered region.

Post-translationally, N-glycosylated. In terms of processing, proteolytic cleavage by trypsin leads to a 120-kDa N-terminal fragment and a 115-kDa C-terminal fragment that are linked through disulfide bonds. Phosphorylation is independent of light exposure and modulates ATPase activity. Expressed in retina namely in the periphery and incisures of the rod outer segments (ROS).

Its subcellular location is the membrane. It is found in the cell projection. The protein resides in the cilium. The protein localises to the photoreceptor outer segment. It localises to the cytoplasmic vesicle. Its subcellular location is the endoplasmic reticulum. It catalyses the reaction ATP + H2O + phospholipidSide 1 = ADP + phosphate + phospholipidSide 2.. The enzyme catalyses an N-all-trans-retinylidenephosphatidylethanolamine(out) + ATP + H2O = an N-all-trans-retinylidenephosphatidylethanolamine(in) + ADP + phosphate + H(+). It carries out the reaction a 1,2-diacyl-sn-glycero-3-phosphoethanolamine(out) + ATP + H2O = a 1,2-diacyl-sn-glycero-3-phosphoethanolamine(in) + ADP + phosphate + H(+). The catalysed reaction is N-11-cis-retinylidenephosphatidylethanolamine(out) + ATP + H2O = N-11-cis-retinylidenephosphatidylethanolamine(in) + ADP + phosphate + H(+). It catalyses the reaction ATP + H2O = ADP + phosphate + H(+). All-trans-retinal transport activity is reduced by EDTA chelation of Mg2+. All-trans-retinal transport activity is inhibited by N-ethylmaleimide (NEM). Phosphatidylethanolamine transport is strongly inhibited by beryllium fluoride and NEM. In terms of biological role, flippase that catalyzes in an ATP-dependent manner the transport of retinal-phosphatidylethanolamine conjugates like the 11-cis and all-trans isomers of N-retinylidene-phosphatidylethanolamine from the lumen to the cytoplasmic leaflet of photoreceptor outer segment disk membranes, where N-cis-retinylidene-phosphatidylethanolamine (N-cis-R-PE) is then isomerized to its all-trans isomer (N-trans-R-PE) and reduced by RDH8 to produce all-trans-retinol (all-trans-rol) and therefore prevents the accumulation of excess of 11-cis-retinal and its schiff-base conjugate and the formation of toxic bisretinoid. Displays both ATPase and GTPase activity that is strongly influenced by the lipid environment and the presence of retinoid compounds. Binds the unprotonated form of N-retinylidene-phosphatidylethanolamine with high affinity in the absence of ATP and ATP binding and hydrolysis induce a protein conformational change that causes the dissociation of N-retinylidene-phosphatidylethanolamine. This Bos taurus (Bovine) protein is Retinal-specific phospholipid-transporting ATPase ABCA4.